A 542-amino-acid polypeptide reads, in one-letter code: Hydroxylamine reductase (542 aa).

Residues Cys-5, Cys-8, Cys-17, and Cys-23 each contribute to the [4Fe-4S] cluster site. Residues His-237, Glu-261, Cys-305, Cys-397, Cys-425, Cys-450, Glu-485, and Lys-487 each coordinate hybrid [4Fe-2O-2S] cluster. Cysteine persulfide is present on Cys-397.

The protein belongs to the HCP family. The cofactor is [4Fe-4S] cluster. Hybrid [4Fe-2O-2S] cluster serves as cofactor.

The protein localises to the cytoplasm. It carries out the reaction A + NH4(+) + H2O = hydroxylamine + AH2 + H(+). Functionally, catalyzes the reduction of hydroxylamine to form NH(3) and H(2)O. This Acetivibrio thermocellus (strain ATCC 27405 / DSM 1237 / JCM 9322 / NBRC 103400 / NCIMB 10682 / NRRL B-4536 / VPI 7372) (Clostridium thermocellum) protein is Hydroxylamine reductase.